The primary structure comprises 668 residues: Alpha-1,4-glucan:maltose-1-phosphate maltosyltransferase (668 aa).

The disordered stretch occupies residues 263 to 288; it reads RKGRNNSLTPAPDDPGSPYAIGSEEG. Positions 264, 324, and 359 each coordinate alpha-maltose 1-phosphate. Catalysis depends on Asp-395, which acts as the Nucleophile. Asn-396 is an alpha-maltose 1-phosphate binding site. Glu-424 serves as the catalytic Proton donor. 535–536 lines the alpha-maltose 1-phosphate pocket; sequence KY.

This sequence belongs to the glycosyl hydrolase 13 family. GlgE subfamily. In terms of assembly, homodimer.

The catalysed reaction is alpha-maltose 1-phosphate + [(1-&gt;4)-alpha-D-glucosyl](n) = [(1-&gt;4)-alpha-D-glucosyl](n+2) + phosphate. In terms of biological role, maltosyltransferase that uses maltose 1-phosphate (M1P) as the sugar donor to elongate linear or branched alpha-(1-&gt;4)-glucans. Is involved in a branched alpha-glucan biosynthetic pathway from trehalose, together with TreS, Mak and GlgB. The polypeptide is Alpha-1,4-glucan:maltose-1-phosphate maltosyltransferase (Cereibacter sphaeroides (strain ATCC 17023 / DSM 158 / JCM 6121 / CCUG 31486 / LMG 2827 / NBRC 12203 / NCIMB 8253 / ATH 2.4.1.) (Rhodobacter sphaeroides)).